A 127-amino-acid chain; its full sequence is uncharacterized protein (127 aa).

This is an uncharacterized protein from Schizosaccharomyces pombe (strain 972 / ATCC 24843) (Fission yeast).